We begin with the raw amino-acid sequence, 574 residues long: Proline--tRNA ligase (574 aa).

Belongs to the class-II aminoacyl-tRNA synthetase family. ProS type 1 subfamily. As to quaternary structure, homodimer.

Its subcellular location is the cytoplasm. The catalysed reaction is tRNA(Pro) + L-proline + ATP = L-prolyl-tRNA(Pro) + AMP + diphosphate. In terms of biological role, catalyzes the attachment of proline to tRNA(Pro) in a two-step reaction: proline is first activated by ATP to form Pro-AMP and then transferred to the acceptor end of tRNA(Pro). As ProRS can inadvertently accommodate and process non-cognate amino acids such as alanine and cysteine, to avoid such errors it has two additional distinct editing activities against alanine. One activity is designated as 'pretransfer' editing and involves the tRNA(Pro)-independent hydrolysis of activated Ala-AMP. The other activity is designated 'posttransfer' editing and involves deacylation of mischarged Ala-tRNA(Pro). The misacylated Cys-tRNA(Pro) is not edited by ProRS. This Ralstonia pickettii (strain 12J) protein is Proline--tRNA ligase.